Consider the following 620-residue polypeptide: DNA primase (620 aa).

A CHC2-type zinc finger spans residues 38–62; it reads CPFHADQNPSMTVSVAKNIFKCFSC. Residues 266–350 form the Toprim domain; the sequence is LKLYLVEGYF…IVEVVDWNQA (85 aa). Residues Glu-272, Asp-319, and Asp-321 each coordinate Mg(2+).

This sequence belongs to the DnaG primase family. Monomer. Interacts with DnaB. Zn(2+) is required as a cofactor. The cofactor is Mg(2+).

It catalyses the reaction ssDNA + n NTP = ssDNA/pppN(pN)n-1 hybrid + (n-1) diphosphate.. RNA polymerase that catalyzes the synthesis of short RNA molecules used as primers for DNA polymerase during DNA replication. The sequence is that of DNA primase from Mycoplasma pneumoniae (strain ATCC 29342 / M129 / Subtype 1) (Mycoplasmoides pneumoniae).